Reading from the N-terminus, the 169-residue chain is DNA damage-inducible transcript 3 protein (169 aa).

Residues 10-18 (FGTLSSWEL) are interaction with TRIB3. Positions 10–26 (FGTLSSWELEAWYEDLQ) are N-terminal. Phosphoserine; by CK2 occurs at positions 14, 15, 30, and 31. The tract at residues 32-139 (DENGGTYVSP…KVAQLAEENE (108 aa)) is disordered. Low complexity predominate over residues 74–89 (TSTSQSPHSPDSSQSS). Phosphoserine; by MAPK14 is present on residues Ser-79 and Ser-82. The 64-residue stretch at 99-162 (QGRTRKRKQS…EATRRALIDR (64 aa)) folds into the bZIP domain. Positions 101–130 (RTRKRKQSGHSPARAGKQRMKEKEQENERK) are basic motif. Positions 119 to 139 (RMKEKEQENERKVAQLAEENE) are enriched in basic and acidic residues. Residues 134-148 (LAEENERLKQEIERL) are leucine-zipper.

It belongs to the bZIP family. As to quaternary structure, heterodimer. Interacts with TCF7L2/TCF4, EP300/P300, HDAC1, HDAC5 and HDAC6. Interacts with TRIB3 which blocks its association with EP300/P300. Interacts with FOXO3, CEBPB and ATF4. Interacts with isoform AltDDIT3 of DDIT3. In terms of processing, ubiquitinated, leading to its degradation by the proteasome. Phosphorylation at serine residues by MAPK14 enhances its transcriptional activation activity while phosphorylation at serine residues by CK2 inhibits its transcriptional activation activity.

It is found in the cytoplasm. It localises to the nucleus. Its function is as follows. Multifunctional transcription factor in endoplasmic reticulum (ER) stress response. Plays an essential role in the response to a wide variety of cell stresses and induces cell cycle arrest and apoptosis in response to ER stress. Plays a dual role both as an inhibitor of CCAAT/enhancer-binding protein (C/EBP) function and as an activator of other genes. Acts as a dominant-negative regulator of C/EBP-induced transcription: dimerizes with members of the C/EBP family, impairs their association with C/EBP binding sites in the promoter regions, and inhibits the expression of C/EBP regulated genes. Positively regulates the transcription of TRIB3, IL6, IL8, IL23, TNFRSF10B/DR5, PPP1R15A/GADD34, BBC3/PUMA, BCL2L11/BIM and ERO1L. Negatively regulates; expression of BCL2 and MYOD1, ATF4-dependent transcriptional activation of asparagine synthetase (ASNS), CEBPA-dependent transcriptional activation of hepcidin (HAMP) and CEBPB-mediated expression of peroxisome proliferator-activated receptor gamma (PPARG). Together with ATF4, mediates ER-mediated cell death by promoting expression of genes involved in cellular amino acid metabolic processes, mRNA translation and the unfolded protein response (UPR) in response to ER stress. Inhibits the canonical Wnt signaling pathway by binding to TCF7L2/TCF4, impairing its DNA-binding properties and repressing its transcriptional activity. Plays a regulatory role in the inflammatory response through the induction of caspase-11 (CASP4/CASP11) which induces the activation of caspase-1 (CASP1) and both these caspases increase the activation of pro-IL1B to mature IL1B which is involved in the inflammatory response. Acts as a major regulator of postnatal neovascularization through regulation of endothelial nitric oxide synthase (NOS3)-related signaling. The polypeptide is DNA damage-inducible transcript 3 protein (DDIT3) (Homo sapiens (Human)).